The following is a 141-amino-acid chain: Ribonuclease P protein component (141 aa).

Disordered regions lie at residues 37-56 and 114-141; these read RTEEESNAAKTGDNPRVGFT and RRITAKGERRSGGKRRTERPEPGPVNGK. Residues 114–124 show a composition bias toward basic and acidic residues; that stretch reads RRITAKGERRS.

It belongs to the RnpA family. As to quaternary structure, consists of a catalytic RNA component (M1 or rnpB) and a protein subunit.

The enzyme catalyses Endonucleolytic cleavage of RNA, removing 5'-extranucleotides from tRNA precursor.. In terms of biological role, RNaseP catalyzes the removal of the 5'-leader sequence from pre-tRNA to produce the mature 5'-terminus. It can also cleave other RNA substrates such as 4.5S RNA. The protein component plays an auxiliary but essential role in vivo by binding to the 5'-leader sequence and broadening the substrate specificity of the ribozyme. The protein is Ribonuclease P protein component of Brucella melitensis biotype 1 (strain ATCC 23456 / CCUG 17765 / NCTC 10094 / 16M).